The sequence spans 72 residues: UPF0495 protein KLLA0D04334g (72 aa).

The chain crosses the membrane as a helical span at residues 20 to 42; sequence PVELTPLFLAMGVALASGTWFSY.

It belongs to the UPF0495 family.

The protein resides in the membrane. This Kluyveromyces lactis (strain ATCC 8585 / CBS 2359 / DSM 70799 / NBRC 1267 / NRRL Y-1140 / WM37) (Yeast) protein is UPF0495 protein KLLA0D04334g.